Here is an 864-residue protein sequence, read N- to C-terminus: Leucine--tRNA ligase (864 aa).

A 'HIGH' region motif is present at residues 42–52 (PYPSGKLHMGH). The short motif at 624-628 (KMSKS) is the 'KMSKS' region element. Lysine 627 lines the ATP pocket.

This sequence belongs to the class-I aminoacyl-tRNA synthetase family.

The protein localises to the cytoplasm. It carries out the reaction tRNA(Leu) + L-leucine + ATP = L-leucyl-tRNA(Leu) + AMP + diphosphate. In Burkholderia cenocepacia (strain HI2424), this protein is Leucine--tRNA ligase.